A 719-amino-acid polypeptide reads, in one-letter code: Phosphoribosylformylglycinamidine synthase subunit PurL (719 aa).

H47 is an active-site residue. Y50 and K89 together coordinate ATP. E91 serves as a coordination point for Mg(2+). Substrate-binding positions include 92 to 95 and R114; that span reads SHNH. H93 acts as the Proton acceptor in catalysis. D115 lines the Mg(2+) pocket. Q238 is a substrate binding site. D266 is a Mg(2+) binding site. 310–312 provides a ligand contact to substrate; it reads ESQ. ATP contacts are provided by D488 and G525. N526 is a binding site for Mg(2+). S528 serves as a coordination point for substrate.

The protein belongs to the FGAMS family. Monomer. Part of the FGAM synthase complex composed of 1 PurL, 1 PurQ and 2 PurS subunits.

The protein resides in the cytoplasm. The enzyme catalyses N(2)-formyl-N(1)-(5-phospho-beta-D-ribosyl)glycinamide + L-glutamine + ATP + H2O = 2-formamido-N(1)-(5-O-phospho-beta-D-ribosyl)acetamidine + L-glutamate + ADP + phosphate + H(+). It participates in purine metabolism; IMP biosynthesis via de novo pathway; 5-amino-1-(5-phospho-D-ribosyl)imidazole from N(2)-formyl-N(1)-(5-phospho-D-ribosyl)glycinamide: step 1/2. Functionally, part of the phosphoribosylformylglycinamidine synthase complex involved in the purines biosynthetic pathway. Catalyzes the ATP-dependent conversion of formylglycinamide ribonucleotide (FGAR) and glutamine to yield formylglycinamidine ribonucleotide (FGAM) and glutamate. The FGAM synthase complex is composed of three subunits. PurQ produces an ammonia molecule by converting glutamine to glutamate. PurL transfers the ammonia molecule to FGAR to form FGAM in an ATP-dependent manner. PurS interacts with PurQ and PurL and is thought to assist in the transfer of the ammonia molecule from PurQ to PurL. The protein is Phosphoribosylformylglycinamidine synthase subunit PurL of Cereibacter sphaeroides (strain ATCC 17025 / ATH 2.4.3) (Rhodobacter sphaeroides).